Reading from the N-terminus, the 355-residue chain is Glucose-6-phosphatase 2 (355 aa).

The Lumenal portion of the chain corresponds to 1–24 (MDFLHRNGVLIIQHLQKDYRAYYT). The chain crosses the membrane as a helical span at residues 25 to 45 (FLNFMSNVGDPRNIFFIYFPL). Over 46–56 (CFQFNQTVGTK) the chain is Cytoplasmic. The chain crosses the membrane as a helical span at residues 57 to 77 (MIWVAVIGDWLNLIFKWILFG). At 78-115 (HRPYWWVQETQIYPNHSSPCLEQFPTTCETGPGSPSGH) the chain is on the lumenal side. Residue Arg79 coordinates substrate. N-linked (GlcNAc...) asparagine glycosylation occurs at Asn92. His115 acts as the Proton donor in catalysis. The chain crosses the membrane as a helical span at residues 116–136 (AMGASCVWYVMVTAALSHTVC). The Cytoplasmic portion of the chain corresponds to 137–146 (GMDKFSITLH). Residues 147–167 (RLTWSFLWSVFWLIQISVCIS) form a helical membrane-spanning segment. A topological domain (lumenal) is located at residue Arg168. Arg168 lines the substrate pocket. Residues 169 to 189 (VFIATHFPHQVILGVIGGMLV) form a helical membrane-spanning segment. Catalysis depends on His174, which acts as the Nucleophile. Over 190 to 211 (AEAFEHTPGIQTASLGTYLKTN) the chain is Cytoplasmic. The chain crosses the membrane as a helical span at residues 212-232 (LFLFLFAVGFYLLLRVLNIDL). Over 233–261 (LWSVPIAKKWCANPDWIHIDTTPFAGLVR) the chain is Lumenal. A helical transmembrane segment spans residues 262-282 (NLGVLFGLGFAINSEMFLLSC). The Cytoplasmic segment spans residues 283 to 293 (RGGNNYTLSFR). Residues 294–314 (LLCALTSLTILQLYHFLQIPT) traverse the membrane as a helical segment. The Lumenal portion of the chain corresponds to 315-318 (HEEH). Residues 319-339 (LFYVLSFCKSASIPLTVVAFI) form a helical membrane-spanning segment. Topologically, residues 340–355 (PYSVHMLMKQSGKKSQ) are cytoplasmic. Positions 352 to 355 (KKSQ) match the Prevents secretion from ER motif.

It belongs to the glucose-6-phosphatase family. Post-translationally, N-glycosylated; the non-glycosylated form is more unstable and is degraded through the proteasome. Specifically expressed in pancreas and also detected to a lower extent in testis. Expressed by most islet cells in the pancreas (at protein level).

The protein localises to the endoplasmic reticulum membrane. The catalysed reaction is D-glucose 6-phosphate + H2O = D-glucose + phosphate. It participates in carbohydrate biosynthesis; gluconeogenesis. Its function is as follows. May hydrolyze glucose-6-phosphate to glucose in the endoplasmic reticulum. May be responsible for glucose production through glycogenolysis and gluconeogenesis. The chain is Glucose-6-phosphatase 2 (G6PC2) from Homo sapiens (Human).